We begin with the raw amino-acid sequence, 201 residues long: 3-isopropylmalate dehydratase small subunit (201 aa).

The protein belongs to the LeuD family. LeuD type 1 subfamily. Heterodimer of LeuC and LeuD.

The enzyme catalyses (2R,3S)-3-isopropylmalate = (2S)-2-isopropylmalate. It functions in the pathway amino-acid biosynthesis; L-leucine biosynthesis; L-leucine from 3-methyl-2-oxobutanoate: step 2/4. Its function is as follows. Catalyzes the isomerization between 2-isopropylmalate and 3-isopropylmalate, via the formation of 2-isopropylmaleate. The polypeptide is 3-isopropylmalate dehydratase small subunit (Ruegeria sp. (strain TM1040) (Silicibacter sp.)).